A 320-amino-acid chain; its full sequence is Protein HEXIM1 (320 aa).

The interval 1–124 is disordered; the sequence is MAEPLLSEFQ…RRRPSKKKRL (124 aa). Over residues 9–19 the composition is skewed to polar residues; that stretch reads FQHQPQTSNCT. Residues 24-47 are compositionally biased toward basic and acidic residues; the sequence is VHEERNPDRPPGAEERVPEEDSRW. Ser-98 is modified (phosphoserine). The segment covering 109-124 has biased composition (basic residues); that stretch reads VGKKKHRRRPSKKKRL. The interval 111–138 is basic region; mediates nuclear localization and interaction with 7SK snRNA and NR3C1; that stretch reads KKKHRRRPSKKKRLWKPYYTLTWEEKKK. Positions 163-166 are interaction with P-TEFb; that stretch reads PYNT. Residues 171 to 211 form an autoinhibitory acidic region; in absence of 7SK snRNA interacts with the basic region preventing interaction with P-TEFb and modulating subcellular localization region; the sequence is MDDHDQEEPDLKTGLYPKRAAAKSDDTSDEDFMEEAGEEDG. A disordered region spans residues 174-223; it reads HDQEEPDLKTGLYPKRAAAKSDDTSDEDFMEEAGEEDGGSDGMGGDGSEF. Position 194 is a phosphoserine (Ser-194). Position 197 is a phosphothreonine (Thr-197). Acidic residues predominate over residues 197-212; it reads TSDEDFMEEAGEEDGG. Phosphoserine is present on residues Ser-198, Ser-213, and Ser-221. Positions 244 to 310 form a coiled coil; that stretch reads SKQELIKEYL…LTENELHRQQ (67 aa). A mediates interaction with CCNT1 region spans residues 247–275; the sequence is ELIKEYLELEKCLSRMEDENNRLRLESQR. The required for inhibition of ESR1-dependent transcription stretch occupies residues 271-316; the sequence is LESQRLDGDDARVRELELELDRLRAENLQLLTENELHRQQERAPLS.

This sequence belongs to the HEXIM family. In terms of assembly, homooligomer and heterooligomer with HEXIM2; probably dimeric. Core component of the 7SK RNP complex, at least composed of 7SK RNA, LARP7, MEPCE, HEXIM1 (or HEXIM2) and P-TEFb (composed of CDK9 and CCNT1/cyclin-T1). Interacts with the N-CoR complex through NCOR1. Interacts with ESR1 and NR3C1. May interact with NF-kappa-B through RELA. Interacts with CCNT2; mediates formation of a tripartite complex with KPNA2. Part of the HDP-RNP complex composed of at least HEXIM1, PRKDC, XRCC5, XRCC6, paraspeckle proteins (SFPQ, NONO, PSPC1, RBM14, and MATR3) and NEAT1 non-coding RNA.

It is found in the nucleus. Its subcellular location is the cytoplasm. Its function is as follows. Transcriptional regulator which functions as a general RNA polymerase II transcription inhibitor. Core component of the 7SK RNP complex: in cooperation with 7SK snRNA sequesters P-TEFb in a large inactive 7SK snRNP complex preventing RNA polymerase II phosphorylation and subsequent transcriptional elongation. May also regulate NF-kappa-B, ESR1, NR3C1 and CIITA-dependent transcriptional activity. Plays a role in the regulation of DNA virus-mediated innate immune response by assembling into the HDP-RNP complex, a complex that serves as a platform for IRF3 phosphorylation and subsequent innate immune response activation through the cGAS-STING pathway. This is Protein HEXIM1 (HEXIM1) from Bos taurus (Bovine).